The following is a 146-amino-acid chain: uncharacterized protein (146 aa).

Belongs to the BlaI transcriptional regulatory family.

This is an uncharacterized protein from Latilactobacillus sakei (Lactobacillus sakei).